A 472-amino-acid polypeptide reads, in one-letter code: Na(+)/H(+) antiporter NhaA (472 aa).

The next 10 membrane-spanning stretches (helical) occupy residues 24–44 (ISGL…NLPA), 66–86 (LPIG…TVGL), 108–128 (LCAV…TALF), 156–176 (GWAV…ALFA), 196–216 (LLAI…YWFI), 234–254 (VPWI…FEAG), 290–310 (PFSA…VHFE), 312–332 (MSPL…LVVG), 361–381 (MIPA…IASL), and 392–412 (ARFG…VLLS). A disordered region spans residues 422-472 (AAAAAADEEDDESIDGDGIGQPSHTTEPTTPTEHPGTLADGTASVEIDFRH). Residues 427–436 (ADEEDDESID) are compositionally biased toward acidic residues. Residues 445 to 456 (HTTEPTTPTEHP) show a composition bias toward low complexity.

It belongs to the NhaA Na(+)/H(+) (TC 2.A.33) antiporter family.

The protein localises to the cell membrane. It carries out the reaction Na(+)(in) + 2 H(+)(out) = Na(+)(out) + 2 H(+)(in). Its function is as follows. Na(+)/H(+) antiporter that extrudes sodium in exchange for external protons. In Bifidobacterium longum (strain NCC 2705), this protein is Na(+)/H(+) antiporter NhaA.